The chain runs to 350 residues: Alcohol dehydrogenase 1 (350 aa).

8 residues coordinate Zn(2+): C44, T46, H67, C98, C101, C104, C112, and C154. The an alcohol site is built by T46 and H67. T46 serves as a coordination point for NAD(+). NAD(+)-binding positions include 178-182 (GAGGG), D202, K207, 271-273 (IGL), and R343.

Belongs to the zinc-containing alcohol dehydrogenase family. In terms of assembly, homotetramer. Zn(2+) is required as a cofactor.

The protein localises to the cytoplasm. It is found in the secreted. It catalyses the reaction a primary alcohol + NAD(+) = an aldehyde + NADH + H(+). The enzyme catalyses a secondary alcohol + NAD(+) = a ketone + NADH + H(+). This Emericella nidulans (strain FGSC A4 / ATCC 38163 / CBS 112.46 / NRRL 194 / M139) (Aspergillus nidulans) protein is Alcohol dehydrogenase 1 (alcA).